Reading from the N-terminus, the 564-residue chain is Serine/threonine-protein kinase PknA (564 aa).

Positions 9–271 constitute a Protein kinase domain; sequence YRVIKTLGSG…TAREMLEALQ (263 aa). Residues 15 to 23 and lysine 40 each bind ATP; that span reads LGSGGFGET. The Proton acceptor role is filled by aspartate 139. The span at 360-406 shows a compositional bias: polar residues; sequence QPVTQTTSLPSETTISNNDTPTVEPSPTDTPETPISQTVTQDPTPQA. Residues 360–458 form a disordered region; the sequence is QPVTQTTSLP…PVEATDRPSP (99 aa). Over residues 428–445 the composition is skewed to low complexity; sequence TTEPTTSVPQPTTPSEPQ.

Belongs to the protein kinase superfamily. Ser/Thr protein kinase family.

It catalyses the reaction L-seryl-[protein] + ATP = O-phospho-L-seryl-[protein] + ADP + H(+). The enzyme catalyses L-threonyl-[protein] + ATP = O-phospho-L-threonyl-[protein] + ADP + H(+). Functionally, probably required for both normal cellular growth and differentiation. Inactivation of pknA leads to colonies that appear light green and rough in the absence of combined nitrogen. This is Serine/threonine-protein kinase PknA (pknA) from Nostoc sp. (strain PCC 7120 / SAG 25.82 / UTEX 2576).